The primary structure comprises 537 residues: CTP synthase (537 aa).

The interval 1-268 (MNTKYIFVTG…DNLVCKKLKL (268 aa)) is amidoligase domain. S14 is a binding site for CTP. UTP is bound at residue S14. ATP is bound at residue 15-20 (SLGKGI). Y55 provides a ligand contact to L-glutamine. Residue D72 participates in ATP binding. D72 and E142 together coordinate Mg(2+). CTP contacts are provided by residues 149–151 (DIE), 189–194 (KTKPTQ), and K225. Residues 189 to 194 (KTKPTQ) and K225 each bind UTP. The region spanning 293–535 (NIALVGKYVE…IKASLNSKHK (243 aa)) is the Glutamine amidotransferase type-1 domain. Residue G355 coordinates L-glutamine. The Nucleophile; for glutamine hydrolysis role is filled by C382. L-glutamine is bound by residues 383-386 (LGMQ), E406, and R463. Catalysis depends on residues H508 and E510.

It belongs to the CTP synthase family. Homotetramer.

The catalysed reaction is UTP + L-glutamine + ATP + H2O = CTP + L-glutamate + ADP + phosphate + 2 H(+). It carries out the reaction L-glutamine + H2O = L-glutamate + NH4(+). It catalyses the reaction UTP + NH4(+) + ATP = CTP + ADP + phosphate + 2 H(+). Its pathway is pyrimidine metabolism; CTP biosynthesis via de novo pathway; CTP from UDP: step 2/2. Its activity is regulated as follows. Allosterically activated by GTP, when glutamine is the substrate; GTP has no effect on the reaction when ammonia is the substrate. The allosteric effector GTP functions by stabilizing the protein conformation that binds the tetrahedral intermediate(s) formed during glutamine hydrolysis. Inhibited by the product CTP, via allosteric rather than competitive inhibition. In terms of biological role, catalyzes the ATP-dependent amination of UTP to CTP with either L-glutamine or ammonia as the source of nitrogen. Regulates intracellular CTP levels through interactions with the four ribonucleotide triphosphates. The polypeptide is CTP synthase (Clostridium kluyveri (strain ATCC 8527 / DSM 555 / NBRC 12016 / NCIMB 10680 / K1)).